Here is a 262-residue protein sequence, read N- to C-terminus: Apolipoprotein A-I-1 (262 aa).

Positions Met-1 to Ala-18 are cleaved as a signal peptide. Positions Val-32–Lys-63 are 3 X approximate tandem repeats. 2 consecutive repeat copies span residues Met-64–Ala-85 and Tyr-87–Met-107. The 10 X approximate tandem repeats stretch occupies residues Met-64–Ala-262. A 3; half-length repeat occupies Lys-108–Glu-118. 5 consecutive repeat copies span residues Pro-119 to Glu-140, Pro-141 to Glu-162, Pro-163 to Met-184, Pro-185 to Ala-206, and Pro-207 to Ser-228. A 9; half-length repeat occupies Pro-229 to Gly-239. The stretch at Pro-240–Ala-262 is repeat 10.

The protein belongs to the apolipoprotein A1/A4/E family.

The protein resides in the secreted. Functionally, participates in the reverse transport of cholesterol from tissues to the liver for excretion by promoting cholesterol efflux from tissues and by acting as a cofactor for the lecithin cholesterol acyltransferase (LCAT). The polypeptide is Apolipoprotein A-I-1 (Oncorhynchus mykiss (Rainbow trout)).